A 689-amino-acid chain; its full sequence is Glycine--tRNA ligase beta subunit (689 aa).

Belongs to the class-II aminoacyl-tRNA synthetase family. In terms of assembly, tetramer of two alpha and two beta subunits.

The protein localises to the cytoplasm. The catalysed reaction is tRNA(Gly) + glycine + ATP = glycyl-tRNA(Gly) + AMP + diphosphate. The chain is Glycine--tRNA ligase beta subunit from Photorhabdus laumondii subsp. laumondii (strain DSM 15139 / CIP 105565 / TT01) (Photorhabdus luminescens subsp. laumondii).